The primary structure comprises 218 residues: Deoxyribose-phosphate aldolase (218 aa).

Aspartate 92 serves as the catalytic Proton donor/acceptor. Lysine 156 acts as the Schiff-base intermediate with acetaldehyde in catalysis. Catalysis depends on lysine 185, which acts as the Proton donor/acceptor.

The protein belongs to the DeoC/FbaB aldolase family. DeoC type 1 subfamily.

The protein resides in the cytoplasm. The enzyme catalyses 2-deoxy-D-ribose 5-phosphate = D-glyceraldehyde 3-phosphate + acetaldehyde. It participates in carbohydrate degradation; 2-deoxy-D-ribose 1-phosphate degradation; D-glyceraldehyde 3-phosphate and acetaldehyde from 2-deoxy-alpha-D-ribose 1-phosphate: step 2/2. Its function is as follows. Catalyzes a reversible aldol reaction between acetaldehyde and D-glyceraldehyde 3-phosphate to generate 2-deoxy-D-ribose 5-phosphate. This Desulfitobacterium hafniense (strain Y51) protein is Deoxyribose-phosphate aldolase.